The primary structure comprises 431 residues: 5-methylthioadenosine/S-adenosylhomocysteine deaminase (431 aa).

The Zn(2+) site is built by His-60 and His-62. 2 residues coordinate substrate: Glu-89 and His-182. A Zn(2+)-binding site is contributed by His-209. Residues Glu-212 and Asp-297 each contribute to the substrate site. Asp-297 provides a ligand contact to Zn(2+).

This sequence belongs to the metallo-dependent hydrolases superfamily. MTA/SAH deaminase family. Requires Zn(2+) as cofactor.

The catalysed reaction is S-adenosyl-L-homocysteine + H2O + H(+) = S-inosyl-L-homocysteine + NH4(+). It carries out the reaction S-methyl-5'-thioadenosine + H2O + H(+) = S-methyl-5'-thioinosine + NH4(+). Functionally, catalyzes the deamination of 5-methylthioadenosine and S-adenosyl-L-homocysteine into 5-methylthioinosine and S-inosyl-L-homocysteine, respectively. Is also able to deaminate adenosine. The polypeptide is 5-methylthioadenosine/S-adenosylhomocysteine deaminase (Natronomonas pharaonis (strain ATCC 35678 / DSM 2160 / CIP 103997 / JCM 8858 / NBRC 14720 / NCIMB 2260 / Gabara) (Halobacterium pharaonis)).